A 409-amino-acid chain; its full sequence is Argininosuccinate synthase (409 aa).

Residues 16–24 (AYSGGLDTS) and alanine 44 each bind ATP. L-citrulline contacts are provided by tyrosine 96 and serine 101. An ATP-binding site is contributed by glycine 126. Residues threonine 128, asparagine 132, and aspartate 133 each coordinate L-aspartate. Asparagine 132 lines the L-citrulline pocket. Arginine 136, serine 185, serine 194, glutamate 270, and tyrosine 282 together coordinate L-citrulline.

This sequence belongs to the argininosuccinate synthase family. Type 1 subfamily. As to quaternary structure, homotetramer.

Its subcellular location is the cytoplasm. It carries out the reaction L-citrulline + L-aspartate + ATP = 2-(N(omega)-L-arginino)succinate + AMP + diphosphate + H(+). It functions in the pathway amino-acid biosynthesis; L-arginine biosynthesis; L-arginine from L-ornithine and carbamoyl phosphate: step 2/3. The protein is Argininosuccinate synthase of Shewanella piezotolerans (strain WP3 / JCM 13877).